A 289-amino-acid chain; its full sequence is Syntaxin-2 (289 aa).

At 1-265 the chain is on the cytoplasmic side; it reads MRDRLPDLTA…KYQSKARRKK (265 aa). The stretch at 68 to 101 forms a coiled coil; sequence EGKIKEELEDLDKEIKKTANRIRGKLKSIEQSCD. The t-SNARE coiled-coil homology domain maps to 192 to 254; sequence LNEIESRHKD…EHAKEETKKA (63 aa). Residues 266–289 traverse the membrane as a helical; Anchor for type IV membrane protein segment; sequence WIIAAVAVAVIAVLALIIGLSVGK.

Belongs to the syntaxin family. Interacts with SYT6 and SYT8; the interaction is Ca(2+)-dependent.

Its subcellular location is the membrane. Its function is as follows. Essential for epithelial morphogenesis. May mediate Ca(2+)-regulation of exocytosis acrosomal reaction in sperm. This Mus musculus (Mouse) protein is Syntaxin-2 (Stx2).